The following is a 372-amino-acid chain: Mitogen-activated protein kinase homolog NTF3 (372 aa).

The 288-residue stretch at 32-319 folds into the Protein kinase domain; that stretch reads YVPIKPIGRG…VIEALQHPYM (288 aa). ATP is bound by residues 38-46 and Lys61; that span reads IGRGAYGIV. The Proton acceptor role is filled by Asp158. A Phosphothreonine modification is found at Thr191. A TXY motif is present at residues 191–193; that stretch reads TEY. Tyr193 bears the Phosphotyrosine mark.

The protein belongs to the protein kinase superfamily. CMGC Ser/Thr protein kinase family. MAP kinase subfamily. Mg(2+) is required as a cofactor. In terms of processing, dually phosphorylated on Thr-191 and Tyr-193, which activates the enzyme. Very low autophosphorylation, although dramatically increased when Mn(2+) is added to the reaction instead of Mg(2+). As to expression, ubiquitous.

The catalysed reaction is L-seryl-[protein] + ATP = O-phospho-L-seryl-[protein] + ADP + H(+). It carries out the reaction L-threonyl-[protein] + ATP = O-phospho-L-threonyl-[protein] + ADP + H(+). Its activity is regulated as follows. Activated by tyrosine and threonine phosphorylation. This is Mitogen-activated protein kinase homolog NTF3 (NTF3) from Nicotiana tabacum (Common tobacco).